A 322-amino-acid polypeptide reads, in one-letter code: NADH-cytochrome b5 reductase 2 (322 aa).

Residues 30–46 (LAPVYVAVGLAGLGVGL) traverse the membrane as a helical segment. The 106-residue stretch at 71 to 176 (QGWVNLKLSD…KGPLPKYPWE (106 aa)) folds into the FAD-binding FR-type domain. An FAD-binding site is contributed by 179-214 (KHKHICLVAGGTGITPMYQLAREIFKNPEDKTKVTL).

The protein belongs to the flavoprotein pyridine nucleotide cytochrome reductase family. FAD serves as cofactor.

It localises to the mitochondrion outer membrane. The catalysed reaction is 2 Fe(III)-[cytochrome b5] + NADH = 2 Fe(II)-[cytochrome b5] + NAD(+) + H(+). Functionally, may mediate the reduction of outer membrane cytochrome b5. The sequence is that of NADH-cytochrome b5 reductase 2 (mcr1) from Emericella nidulans (strain FGSC A4 / ATCC 38163 / CBS 112.46 / NRRL 194 / M139) (Aspergillus nidulans).